Consider the following 130-residue polypeptide: Small ribosomal subunit protein uS8 (130 aa).

The protein belongs to the universal ribosomal protein uS8 family. In terms of assembly, part of the 30S ribosomal subunit.

One of the primary rRNA binding proteins, it binds directly to 16S rRNA central domain where it helps coordinate assembly of the platform of the 30S subunit. The protein is Small ribosomal subunit protein uS8 of Natronomonas pharaonis (strain ATCC 35678 / DSM 2160 / CIP 103997 / JCM 8858 / NBRC 14720 / NCIMB 2260 / Gabara) (Halobacterium pharaonis).